Consider the following 125-residue polypeptide: Large ribosomal subunit protein bL12 (125 aa).

The protein belongs to the bacterial ribosomal protein bL12 family. As to quaternary structure, homodimer. Part of the ribosomal stalk of the 50S ribosomal subunit. Forms a multimeric L10(L12)X complex, where L10 forms an elongated spine to which 2 to 4 L12 dimers bind in a sequential fashion. Binds GTP-bound translation factors.

Functionally, forms part of the ribosomal stalk which helps the ribosome interact with GTP-bound translation factors. Is thus essential for accurate translation. In Methylobacterium radiotolerans (strain ATCC 27329 / DSM 1819 / JCM 2831 / NBRC 15690 / NCIMB 10815 / 0-1), this protein is Large ribosomal subunit protein bL12.